We begin with the raw amino-acid sequence, 190 residues long: Probable nicotinate-nucleotide adenylyltransferase (190 aa).

Belongs to the NadD family.

It carries out the reaction nicotinate beta-D-ribonucleotide + ATP + H(+) = deamido-NAD(+) + diphosphate. Its pathway is cofactor biosynthesis; NAD(+) biosynthesis; deamido-NAD(+) from nicotinate D-ribonucleotide: step 1/1. In terms of biological role, catalyzes the reversible adenylation of nicotinate mononucleotide (NaMN) to nicotinic acid adenine dinucleotide (NaAD). This chain is Probable nicotinate-nucleotide adenylyltransferase, found in Frankia casuarinae (strain DSM 45818 / CECT 9043 / HFP020203 / CcI3).